A 103-amino-acid polypeptide reads, in one-letter code: Large ribosomal subunit protein bL21 (103 aa).

It belongs to the bacterial ribosomal protein bL21 family. As to quaternary structure, part of the 50S ribosomal subunit. Contacts protein L20.

Its function is as follows. This protein binds to 23S rRNA in the presence of protein L20. This Haemophilus influenzae (strain PittEE) protein is Large ribosomal subunit protein bL21.